The primary structure comprises 128 residues: SH2 domain-containing protein 1A (128 aa).

The SH2 domain maps to 6–102 (VYHGKISRET…GIVIPLQYPV (97 aa)). The segment at 67–92 (ETAPGVHKRYFRKIKNLISAFQKPDQ) is interaction with FYN SH3 domain. The residue at position 89 (Lys89) is an N6-acetyllysine. Residues 106–128 (SSARSTQGTTGIREDPDVCLKAP) are disordered. A compositionally biased stretch (basic and acidic residues) spans 117-128 (IREDPDVCLKAP).

In terms of assembly, interacts with CD84, CD244, LY9, SLAMF1 and FYN. Interacts with NTRK1, NTRK2 and NTRK3.

The protein resides in the cytoplasm. Its function is as follows. Cytoplasmic adapter regulating receptors of the signaling lymphocytic activation molecule (SLAM) family such as SLAMF1, CD244, LY9, CD84, SLAMF6 and SLAMF7. In SLAM signaling seems to cooperate with SH2D1B/EAT-2. Initially it has been proposed that association with SLAMF1 prevents SLAMF1 binding to inhibitory effectors including INPP5D/SHIP1 and PTPN11/SHP-2. However, by simultaneous interactions, recruits FYN which subsequently phosphorylates and activates SLAMF1. Positively regulates CD244/2B4- and CD84-mediated natural killer (NK) cell functions. Can also promote CD48-, SLAMF6 -, LY9-, and SLAMF7-mediated NK cell activation. In the context of NK cell-mediated cytotoxicity enhances conjugate formation with target cells. May also regulate the activity of the neurotrophin receptors NTRK1, NTRK2 and NTRK3. This Macaca mulatta (Rhesus macaque) protein is SH2 domain-containing protein 1A (SH2D1A).